The chain runs to 627 residues: tRNA uridine 5-carboxymethylaminomethyl modification enzyme MnmG (627 aa).

FAD is bound by residues 13–18 (GGGHAG), V125, and S180. 274 to 288 (GPRYCPSIEDKVVRF) provides a ligand contact to NAD(+). Q371 contributes to the FAD binding site.

It belongs to the MnmG family. As to quaternary structure, homodimer. Heterotetramer of two MnmE and two MnmG subunits. The cofactor is FAD.

It is found in the cytoplasm. Its function is as follows. NAD-binding protein involved in the addition of a carboxymethylaminomethyl (cmnm) group at the wobble position (U34) of certain tRNAs, forming tRNA-cmnm(5)s(2)U34. This Francisella tularensis subsp. holarctica (strain FTNF002-00 / FTA) protein is tRNA uridine 5-carboxymethylaminomethyl modification enzyme MnmG.